A 350-amino-acid chain; its full sequence is Ion-translocating oxidoreductase complex subunit D (350 aa).

5 helical membrane-spanning segments follow: residues 15–35 (QTQT…LAQT), 36–56 (WFFG…ALGA), 67–87 (PIKP…IGLS), 88–108 (LPPL…IIIA), and 122–142 (PAMV…TSWL). Residue threonine 186 is modified to FMN phosphoryl threonine. Transmembrane regions (helical) follow at residues 213-233 (WGGI…LFLL), 242-262 (IPGA…LMTP), 264-284 (ATAT…AFFI), and 299-316 (LVYG…RRFG).

The protein belongs to the NqrB/RnfD family. In terms of assembly, the complex is composed of six subunits: RnfA, RnfB, RnfC, RnfD, RnfE and RnfG. It depends on FMN as a cofactor.

The protein localises to the cell inner membrane. Part of a membrane-bound complex that couples electron transfer with translocation of ions across the membrane. In Aeromonas salmonicida (strain A449), this protein is Ion-translocating oxidoreductase complex subunit D.